The following is a 407-amino-acid chain: MEIILGVVMFTLIVLVLSGLILAARSKLVNAGDVVIEINNEADKQIRTPAGDKLLNTLSSNGIFVSSACGGGGSCGQCRVTVKEGGGDILPTELSHITKRDAKAGCRLACQVAVKQNMKIELPEEIFGVKKWECEVISNDNKATFIKELKLRIPEGEVVPFRAGGYIQIECPPHKVAYADFDVPDEYRSDWDKFNLFRYVSEVKEPTLRAYSMANYPEEKGIIMLNVRIATPPPKVPDAPPGIMSSYIWSLKPGDKVTISGPFGEFFAKETDAEMVFIGGGAGMAPMRSHIFDQLKRLHSTRKISFWYGARSLREMFYDEEFEQLARDNPNFTFHVALSDPLPEDNWTGHTGFIHNVLYENYLRDHPAPEDCEFYMCGPPVMNAAVIKMLKDLGVEDENILLDDFGG.

A helical transmembrane segment spans residues Ile3 to Ala23. In terms of domain architecture, 2Fe-2S ferredoxin-type spans Gly32–Ile126. [2Fe-2S] cluster-binding residues include Cys69, Cys75, Cys78, and Cys110. Positions Val129–Lys269 constitute an FAD-binding FR-type domain.

The protein belongs to the NqrF family. As to quaternary structure, composed of six subunits; NqrA, NqrB, NqrC, NqrD, NqrE and NqrF. [2Fe-2S] cluster serves as cofactor. Requires FAD as cofactor.

The protein localises to the cell inner membrane. It catalyses the reaction a ubiquinone + n Na(+)(in) + NADH + H(+) = a ubiquinol + n Na(+)(out) + NAD(+). Its function is as follows. NQR complex catalyzes the reduction of ubiquinone-1 to ubiquinol by two successive reactions, coupled with the transport of Na(+) ions from the cytoplasm to the periplasm. The first step is catalyzed by NqrF, which accepts electrons from NADH and reduces ubiquinone-1 to ubisemiquinone by a one-electron transfer pathway. This chain is Na(+)-translocating NADH-quinone reductase subunit F, found in Klebsiella pneumoniae subsp. pneumoniae (strain ATCC 700721 / MGH 78578).